The following is a 317-amino-acid chain: Melanocyte-stimulating hormone receptor (317 aa).

Residues 1–37 (MPVQGSQRRLLGSLNSTPTATPKLGLAANQTGAWCLE) lie on the Extracellular side of the membrane. N-linked (GlcNAc...) asparagine glycosylation is present at Asn29. Residues 38 to 63 (VSIPDGLFLSLGLVSLVENVLVVAAI) form a helical membrane-spanning segment. Topologically, residues 64-72 (AKNRNLHSP) are cytoplasmic. The chain crosses the membrane as a helical span at residues 73–93 (MYCFICCLALSDLLVSGSNML). Topologically, residues 94-118 (ETAVILLLEAGALAARAAVVQQLDN) are extracellular. The chain crosses the membrane as a helical span at residues 119–140 (VIDVITCSSMLSSLCFLGAIAV). The Cytoplasmic segment spans residues 141 to 163 (DRYISIFYALRYHSIVTLPRAQR). A helical transmembrane segment spans residues 164–183 (VVAAIWVASVLFSTLFIAYY). At 184–191 (DHAAVLLC) the chain is on the extracellular side. Residues 192–211 (LVVFFLAMLVLMAVLYVHML) traverse the membrane as a helical segment. The Cytoplasmic segment spans residues 212 to 240 (ARACQHAQGIAQLHKRQRPAHQGFGLKGA). Residues 241-266 (ATLTILLGIFFLCWGPFFLHLTLIVL) traverse the membrane as a helical segment. At 267–279 (CPQHPTCSCIFKN) the chain is on the extracellular side. A helical membrane pass occupies residues 280–300 (FNLFLALIICNAIIDPLIYAF). Residues 301 to 317 (RSQELRRTLKEVLLCSW) lie on the Cytoplasmic side of the membrane. A lipid anchor (S-palmitoyl cysteine) is attached at Cys315.

The protein belongs to the G-protein coupled receptor 1 family. As to quaternary structure, interacts with MGRN1, but does not undergo MGRN1-mediated ubiquitination; this interaction competes with GNAS-binding and thus inhibits agonist-induced cAMP production. Interacts with OPN3; the interaction results in a decrease in MC1R-mediated cAMP signaling and ultimately a decrease in melanin production in melanocytes.

Its subcellular location is the cell membrane. Functionally, receptor for MSH (alpha, beta and gamma) and ACTH. The activity of this receptor is mediated by G proteins which activate adenylate cyclase. Mediates melanogenesis, the production of eumelanin (black/brown) and phaeomelanin (red/yellow), via regulation of cAMP signaling in melanocytes. This chain is Melanocyte-stimulating hormone receptor (MC1R), found in Colobus guereza (Mantled guereza).